Here is a 1254-residue protein sequence, read N- to C-terminus: Zinc finger protein BRUTUS (1254 aa).

The interval 1-40 (MATPLPDFETARGGGAVASSSTTVLPSSVSSSSSSSRPLP) is disordered. Residues 19-40 (SSSTTVLPSSVSSSSSSSRPLP) are compositionally biased toward low complexity. Residues 201 to 221 (FLCSIPVNMLAVFLPWISSSI) form a helical membrane-spanning segment. The disordered stretch occupies residues 893-913 (GSPDSSSTETSKPSPQKDNDH). The segment covering 895–906 (PDSSSTETSKPS) has biased composition (polar residues). The segment at 999 to 1068 (PEKQIYGCEH…PICTTPSCDG (70 aa)) adopts a CHY-type zinc-finger fold. Residues C1006, H1008, C1019, C1020, C1026, C1029, H1030, H1036, C1048, C1051, C1061, C1066, C1076, C1079, H1090, C1091, C1094, C1097, H1109, C1110, C1113, C1116, H1124, and C1126 each contribute to the Zn(2+) site. The CTCHY-type zinc finger occupies 1071–1134 (MAKHYCSICK…KCLEKSLETN (64 aa)). Residues 1135–1176 (CPICCEFLFTSSEAVRALPCGHYMHSACFQAYTCSHYTCPIC) form an RING-type; atypical zinc finger.

As to quaternary structure, interacts with the PYEL proteins bHLH115, bHLH104 and ILR3 in the nucleus. Binds zinc and iron ions. In terms of tissue distribution, expressed in cotyledons of seedlings, young leaves, developing and mature embryos, and other reproductive tissues including floral vasculature, funiculus, septum, and gynoecium valves.

The protein resides in the membrane. It localises to the nucleus. It functions in the pathway protein modification; protein ubiquitination. Functionally, essential protein. Negatively regulates the response to iron deficiency and thus contributes to iron homeostasis. Exhibits E3 ubiquitin-protein ligase activity in vitro. Plays a role in root growth, rhizosphere acidification, and iron reductase activity in response to iron deprivation. Facilitates 26S proteasome-mediated degradation of PYEL proteins in the absence of iron. The protein is Zinc finger protein BRUTUS of Arabidopsis thaliana (Mouse-ear cress).